A 376-amino-acid chain; its full sequence is uncharacterized protein (376 aa).

The N-terminal stretch at 1-28 (MCKPRVWRIAHTIVHVGALLLGTSQLTT) is a signal peptide. Cys-29 is lipidated: N-palmitoyl cysteine. Cys-29 carries the S-diacylglycerol cysteine lipid modification.

This sequence belongs to the TP013X lipoprotein family.

Its subcellular location is the cell membrane. This is an uncharacterized protein from Treponema pallidum (strain Nichols).